The primary structure comprises 106 residues: UPF0145 protein CLL_A2504 (106 aa).

It belongs to the UPF0145 family.

This chain is UPF0145 protein CLL_A2504, found in Clostridium botulinum (strain Eklund 17B / Type B).